The chain runs to 117 residues: UPF0231 protein HI_1724 (117 aa).

The protein belongs to the UPF0231 family.

In Haemophilus influenzae (strain ATCC 51907 / DSM 11121 / KW20 / Rd), this protein is UPF0231 protein HI_1724.